We begin with the raw amino-acid sequence, 485 residues long: Glutamate--tRNA ligase (485 aa).

Positions 12 to 22 match the 'HIGH' region motif; that stretch reads PSPTGEPHVGT. The short motif at 253 to 257 is the 'KMSKS' region element; that stretch reads KLSKR. Lys256 is an ATP binding site.

Belongs to the class-I aminoacyl-tRNA synthetase family. Glutamate--tRNA ligase type 1 subfamily. Monomer.

It is found in the cytoplasm. The enzyme catalyses tRNA(Glu) + L-glutamate + ATP = L-glutamyl-tRNA(Glu) + AMP + diphosphate. Its function is as follows. Catalyzes the attachment of glutamate to tRNA(Glu) in a two-step reaction: glutamate is first activated by ATP to form Glu-AMP and then transferred to the acceptor end of tRNA(Glu). The polypeptide is Glutamate--tRNA ligase (Sinorhizobium medicae (strain WSM419) (Ensifer medicae)).